The primary structure comprises 335 residues: Calcium/calmodulin-dependent protein kinase type I (335 aa).

The Protein kinase domain occupies 31–291; the sequence is YRVGRVLGGG…AADALKHPFL (261 aa). 37-45 provides a ligand contact to ATP; the sequence is LGGGTYATV. Asp-154 functions as the Proton acceptor in the catalytic mechanism. A Phosphothreonine; by autocatalysis modification is found at Thr-192. A calmodulin-binding region spans residues 310 to 334; that stretch reads NARKTFRTAYNAVRAFNTWKKLENK.

This sequence belongs to the protein kinase superfamily. CAMK Ser/Thr protein kinase family. CaMK subfamily.

Its subcellular location is the cytoplasm. It carries out the reaction L-seryl-[protein] + ATP = O-phospho-L-seryl-[protein] + ADP + H(+). The enzyme catalyses L-threonyl-[protein] + ATP = O-phospho-L-threonyl-[protein] + ADP + H(+). Important in cell cycle regulation. This chain is Calcium/calmodulin-dependent protein kinase type I (cmk1), found in Schizosaccharomyces pombe (strain 972 / ATCC 24843) (Fission yeast).